The chain runs to 210 residues: Ion-translocating oxidoreductase complex subunit G (210 aa).

A helical membrane pass occupies residues 9-29 (GVTLAVFAAITTGLTAVINAV). Residue T175 is modified to FMN phosphoryl threonine.

Belongs to the RnfG family. In terms of assembly, the complex is composed of six subunits: RnfA, RnfB, RnfC, RnfD, RnfE and RnfG. Requires FMN as cofactor.

It localises to the cell inner membrane. Its function is as follows. Part of a membrane-bound complex that couples electron transfer with translocation of ions across the membrane. The protein is Ion-translocating oxidoreductase complex subunit G of Erwinia tasmaniensis (strain DSM 17950 / CFBP 7177 / CIP 109463 / NCPPB 4357 / Et1/99).